The primary structure comprises 154 residues: Small ribosomal subunit protein bS6 (154 aa).

The disordered stretch occupies residues 94–154 (VKQEGPLPTP…SSQGKESQKS (61 aa)). Over residues 103 to 112 (PRSSNKGYNQ) the composition is skewed to polar residues. Residues 113–139 (SEKKDIESIDSTNKSEFKEEANDKKTA) are compositionally biased toward basic and acidic residues. Residues 140–154 (TSESTSSQGKESQKS) show a composition bias toward polar residues.

This sequence belongs to the bacterial ribosomal protein bS6 family.

Its function is as follows. Binds together with bS18 to 16S ribosomal RNA. This is Small ribosomal subunit protein bS6 from Prochlorococcus marinus subsp. pastoris (strain CCMP1986 / NIES-2087 / MED4).